A 207-amino-acid polypeptide reads, in one-letter code: Holliday junction branch migration complex subunit RuvA (207 aa).

The segment at methionine 1–histidine 65 is domain I. The segment at threonine 66 to leucine 144 is domain II. Positions alanine 145 to methionine 155 are flexible linker. Residues methionine 155–isoleucine 207 are domain III.

Belongs to the RuvA family. As to quaternary structure, homotetramer. Forms an RuvA(8)-RuvB(12)-Holliday junction (HJ) complex. HJ DNA is sandwiched between 2 RuvA tetramers; dsDNA enters through RuvA and exits via RuvB. An RuvB hexamer assembles on each DNA strand where it exits the tetramer. Each RuvB hexamer is contacted by two RuvA subunits (via domain III) on 2 adjacent RuvB subunits; this complex drives branch migration. In the full resolvosome a probable DNA-RuvA(4)-RuvB(12)-RuvC(2) complex forms which resolves the HJ.

The protein resides in the cytoplasm. The RuvA-RuvB-RuvC complex processes Holliday junction (HJ) DNA during genetic recombination and DNA repair, while the RuvA-RuvB complex plays an important role in the rescue of blocked DNA replication forks via replication fork reversal (RFR). RuvA specifically binds to HJ cruciform DNA, conferring on it an open structure. The RuvB hexamer acts as an ATP-dependent pump, pulling dsDNA into and through the RuvAB complex. HJ branch migration allows RuvC to scan DNA until it finds its consensus sequence, where it cleaves and resolves the cruciform DNA. The sequence is that of Holliday junction branch migration complex subunit RuvA from Chlamydia abortus (strain DSM 27085 / S26/3) (Chlamydophila abortus).